The chain runs to 317 residues: Ornithine carbamoyltransferase (317 aa).

Carbamoyl phosphate contacts are provided by residues 57–60 (STRT), Q84, R108, and 135–138 (HPCQ). L-ornithine contacts are provided by residues N166, D230, and 234–235 (SM). Carbamoyl phosphate contacts are provided by residues 270-271 (CL) and R298.

This sequence belongs to the aspartate/ornithine carbamoyltransferase superfamily. OTCase family. In terms of assembly, homododecamer.

It is found in the cytoplasm. It carries out the reaction carbamoyl phosphate + L-ornithine = L-citrulline + phosphate + H(+). It participates in amino-acid biosynthesis; L-arginine biosynthesis; L-arginine from L-ornithine and carbamoyl phosphate: step 1/3. Functionally, reversibly catalyzes the transfer of the carbamoyl group from carbamoyl phosphate (CP) to the N(epsilon) atom of ornithine (ORN) to produce L-citrulline. The chain is Ornithine carbamoyltransferase from Pyrococcus abyssi (strain GE5 / Orsay).